Consider the following 294-residue polypeptide: Nucleotide-binding protein CLJ_B3680 (294 aa).

8 to 15 contacts ATP; it reads GLSGAGKT. 59-62 is a GTP binding site; that stretch reads DIRG.

Belongs to the RapZ-like family.

Its function is as follows. Displays ATPase and GTPase activities. This is Nucleotide-binding protein CLJ_B3680 from Clostridium botulinum (strain 657 / Type Ba4).